A 102-amino-acid polypeptide reads, in one-letter code: Small ribosomal subunit protein uS10 (102 aa).

It belongs to the universal ribosomal protein uS10 family. In terms of assembly, part of the 30S ribosomal subunit.

Involved in the binding of tRNA to the ribosomes. The polypeptide is Small ribosomal subunit protein uS10 (Akkermansia muciniphila (strain ATCC BAA-835 / DSM 22959 / JCM 33894 / BCRC 81048 / CCUG 64013 / CIP 107961 / Muc)).